A 273-amino-acid chain; its full sequence is Ribonuclease PH (273 aa).

Phosphate is bound by residues arginine 86 and 124 to 126; that span reads GTR. The interval 254–273 is disordered; the sequence is GHQEPGEGAGVSLAPGGGGL.

The protein belongs to the RNase PH family. In terms of assembly, homohexameric ring arranged as a trimer of dimers.

The enzyme catalyses tRNA(n+1) + phosphate = tRNA(n) + a ribonucleoside 5'-diphosphate. Functionally, phosphorolytic 3'-5' exoribonuclease that plays an important role in tRNA 3'-end maturation. Removes nucleotide residues following the 3'-CCA terminus of tRNAs; can also add nucleotides to the ends of RNA molecules by using nucleoside diphosphates as substrates, but this may not be physiologically important. Probably plays a role in initiation of 16S rRNA degradation (leading to ribosome degradation) during starvation. This chain is Ribonuclease PH, found in Symbiobacterium thermophilum (strain DSM 24528 / JCM 14929 / IAM 14863 / T).